We begin with the raw amino-acid sequence, 617 residues long: Type VII secretion systems protein EssD (617 aa).

The disordered stretch occupies residues 420–448 (QNHVTHGPKDSMVRSEGKHSISSHEMNSS). The segment covering 426–438 (GPKDSMVRSEGKH) has biased composition (basic and acidic residues).

The protein belongs to the EssD family. Interacts (via C-terminal) with EssG; this interaction blocks EssD activity. Interacts with EssE.

Its subcellular location is the secreted. The protein localises to the cell membrane. In terms of biological role, component of the type VII secretion system (Ess). Plays a role in Ess secretion during infection. Required for the efficient secretion of EsxA. Required for abscess formation and staphylococcal persistence in host tissue. Possesses a toxic DNase activity that is modulated by EssG by forming a nuclease toxin-antitoxin pair. This nuclease toxin targets competitor bacteria. The polypeptide is Type VII secretion systems protein EssD (Staphylococcus aureus (strain Newman)).